Reading from the N-terminus, the 544-residue chain is Spore germination protein KA (544 aa).

Residues 1 to 36 (MPLFSKRKNNTDSKDKQNTDERNQEQQQEKERPVLI) are disordered. Residues 9–33 (NNTDSKDKQNTDERNQEQQQEKERP) are compositionally biased toward basic and acidic residues. 5 helical membrane-spanning segments follow: residues 279-299 (FAII…FVQF), 321-341 (VLVF…TTFH), 392-412 (AVSI…GIVS), 416-436 (VIIV…AMAI), and 443-463 (FIFI…GIIM). Residues 504-523 (KRPESVSKEDKVRQGKDQRP) show a composition bias toward basic and acidic residues. The tract at residues 504 to 544 (KRPESVSKEDKVRQGKDQRPEPAASRGMVNKDLEEGDQNGT) is disordered.

It belongs to the GerABKA family.

The protein localises to the cell membrane. In terms of biological role, involved in the germination response to the combination of glucose, fructose, L-asparagine, and KCl. In Bacillus subtilis (strain 168), this protein is Spore germination protein KA (gerKA).